The sequence spans 194 residues: Xanthine phosphoribosyltransferase (194 aa).

Residues Leu20 and Asn27 each contribute to the xanthine site. Residue 128-132 participates in 5-phospho-alpha-D-ribose 1-diphosphate binding; that stretch reads ANGQA. Xanthine is bound at residue Lys156.

This sequence belongs to the purine/pyrimidine phosphoribosyltransferase family. Xpt subfamily. In terms of assembly, homodimer.

It is found in the cytoplasm. It carries out the reaction XMP + diphosphate = xanthine + 5-phospho-alpha-D-ribose 1-diphosphate. The protein operates within purine metabolism; XMP biosynthesis via salvage pathway; XMP from xanthine: step 1/1. Functionally, converts the preformed base xanthine, a product of nucleic acid breakdown, to xanthosine 5'-monophosphate (XMP), so it can be reused for RNA or DNA synthesis. The sequence is that of Xanthine phosphoribosyltransferase from Bacillus licheniformis (strain ATCC 14580 / DSM 13 / JCM 2505 / CCUG 7422 / NBRC 12200 / NCIMB 9375 / NCTC 10341 / NRRL NRS-1264 / Gibson 46).